Consider the following 151-residue polypeptide: Transcriptional regulator MraZ (151 aa).

SpoVT-AbrB domains follow at residues 5–52 and 81–124; these read ANAI…PLSE and AVDL…DEDA.

This sequence belongs to the MraZ family. In terms of assembly, forms oligomers.

It is found in the cytoplasm. The protein resides in the nucleoid. The chain is Transcriptional regulator MraZ from Pseudomonas savastanoi pv. phaseolicola (strain 1448A / Race 6) (Pseudomonas syringae pv. phaseolicola (strain 1448A / Race 6)).